A 206-amino-acid chain; its full sequence is Imidazoleglycerol-phosphate dehydratase (206 aa).

A disordered region spans residues 1–24 (MDPTASGRQAPRNPRQATVQRETK).

Belongs to the imidazoleglycerol-phosphate dehydratase family.

It localises to the cytoplasm. The enzyme catalyses D-erythro-1-(imidazol-4-yl)glycerol 3-phosphate = 3-(imidazol-4-yl)-2-oxopropyl phosphate + H2O. It participates in amino-acid biosynthesis; L-histidine biosynthesis; L-histidine from 5-phospho-alpha-D-ribose 1-diphosphate: step 6/9. This is Imidazoleglycerol-phosphate dehydratase from Acidothermus cellulolyticus (strain ATCC 43068 / DSM 8971 / 11B).